Consider the following 244-residue polypeptide: Uracil phosphoribosyltransferase (244 aa).

GTP contacts are provided by residues Lys59, Arg68, and 102–105 (YSKI). Arg112 contacts 5-phospho-alpha-D-ribose 1-diphosphate. Residue Arg129 participates in GTP binding. Residue Arg137 coordinates 5-phospho-alpha-D-ribose 1-diphosphate. Residue Arg158 coordinates GTP. Residues Asp164 and 164–172 (DPMCATAGS) contribute to the 5-phospho-alpha-D-ribose 1-diphosphate site. Residues Ile229 and 234 to 236 (GDF) contribute to the uracil site. Asp235 is a binding site for 5-phospho-alpha-D-ribose 1-diphosphate.

This sequence belongs to the UPRTase family. In terms of assembly, monomer. Forms homodimers in presence of substrates and homotetramers in the presence of GTP. Requires Mg(2+) as cofactor.

It carries out the reaction UMP + diphosphate = 5-phospho-alpha-D-ribose 1-diphosphate + uracil. It functions in the pathway pyrimidine metabolism; UMP biosynthesis via salvage pathway; UMP from uracil: step 1/1. Allosterically activated by GTP. Binding of GTP leads to 5-time activation of the enzyme. Functionally, catalyzes the conversion of uracil and 5-phospho-alpha-D-ribose 1-diphosphate (PRPP) to UMP and diphosphate. This chain is Uracil phosphoribosyltransferase (uprt), found in Toxoplasma gondii.